The following is a 353-amino-acid chain: Uroporphyrinogen decarboxylase (353 aa).

Substrate contacts are provided by residues 30 to 34, aspartate 79, tyrosine 154, serine 209, and histidine 332; that span reads RQAGR.

It belongs to the uroporphyrinogen decarboxylase family. Homodimer.

Its subcellular location is the cytoplasm. It carries out the reaction uroporphyrinogen III + 4 H(+) = coproporphyrinogen III + 4 CO2. It functions in the pathway porphyrin-containing compound metabolism; protoporphyrin-IX biosynthesis; coproporphyrinogen-III from 5-aminolevulinate: step 4/4. In terms of biological role, catalyzes the decarboxylation of four acetate groups of uroporphyrinogen-III to yield coproporphyrinogen-III. This is Uroporphyrinogen decarboxylase from Mycobacterium ulcerans (strain Agy99).